The following is a 604-amino-acid chain: Glutamine--fructose-6-phosphate aminotransferase [isomerizing] (604 aa).

Cysteine 2 acts as the Nucleophile; for GATase activity in catalysis. Positions cysteine 2–aspartate 218 constitute a Glutamine amidotransferase type-2 domain. 2 SIS domains span residues isoleucine 284–lysine 423 and valine 456–proline 594. Residue lysine 599 is the For Fru-6P isomerization activity of the active site.

As to quaternary structure, homodimer.

Its subcellular location is the cytoplasm. It carries out the reaction D-fructose 6-phosphate + L-glutamine = D-glucosamine 6-phosphate + L-glutamate. Functionally, catalyzes the first step in hexosamine metabolism, converting fructose-6P into glucosamine-6P using glutamine as a nitrogen source. This Streptococcus mutans serotype c (strain ATCC 700610 / UA159) protein is Glutamine--fructose-6-phosphate aminotransferase [isomerizing].